Consider the following 276-residue polypeptide: Small ribosomal subunit protein uS3 (276 aa).

The KH type-2 domain occupies 43–111 (IRQLMSTGME…QVQLNILEVK (69 aa)). The span at 218–227 (AQAASAPSRG) shows a compositional bias: low complexity. Residues 218-276 (AQAASAPSRGPRSDRGGRPGGADRGDRRRRNDRPAADAAPAAEAPAVEAAPAAAEGGQA) are disordered. Over residues 228-243 (PRSDRGGRPGGADRGD) the composition is skewed to basic and acidic residues. The span at 253-276 (ADAAPAAEAPAVEAAPAAAEGGQA) shows a compositional bias: low complexity.

This sequence belongs to the universal ribosomal protein uS3 family. As to quaternary structure, part of the 30S ribosomal subunit. Forms a tight complex with proteins S10 and S14.

Functionally, binds the lower part of the 30S subunit head. Binds mRNA in the 70S ribosome, positioning it for translation. The polypeptide is Small ribosomal subunit protein uS3 (Pseudarthrobacter chlorophenolicus (strain ATCC 700700 / DSM 12829 / CIP 107037 / JCM 12360 / KCTC 9906 / NCIMB 13794 / A6) (Arthrobacter chlorophenolicus)).